Here is a 660-residue protein sequence, read N- to C-terminus: WD repeat-containing protein 48 homolog (660 aa).

8 WD repeats span residues 23–78 (MHRS…RDLH), 84–120 (HHTDWVNDIVLCCGVISASSDTTVKVWNAQKGFCMST), 123–162 (THRDYVRALAYARDVEMVASGGFDQLIYLWDIATLTKLTA), 174–213 (GNKDSIYSLATNPSGTVVISGSTEKVLRVFDPRACQKLMK), 216–255 (GHTDNVKAVVVNRDGTQCISASSDGTIKLWSIGQQCCISS), 258–297 (CHSESVWALQVDSNFSCVYSGGRDKRIFRTAINDFKTAQL), 300–341 (IEDA…ISVE), and 362–401 (PGAASIRQHVVLNDKRHIVTKDTDDNVAMWDVLKGRKVCD).

This sequence belongs to the WD repeat WDR48 family.

In terms of biological role, regulator of deubiquitinating complexes. Activates deubiquitination by increasing the catalytic turnover without increasing the affinity of deubiquitinating enzymes for the substrate. This Brugia malayi (Filarial nematode worm) protein is WD repeat-containing protein 48 homolog.